We begin with the raw amino-acid sequence, 143 residues long: S-adenosylmethionine decarboxylase proenzyme (143 aa).

Ser-66 (schiff-base intermediate with substrate; via pyruvic acid) is an active-site residue. Pyruvic acid (Ser); by autocatalysis is present on Ser-66. Residue His-71 is the Proton acceptor; for processing activity of the active site. The active-site Proton donor; for catalytic activity is Cys-86.

It belongs to the prokaryotic AdoMetDC family. Type 1 subfamily. As to quaternary structure, heterotetramer of two alpha and two beta chains arranged as a dimer of alpha/beta heterodimers. Pyruvate is required as a cofactor. Is synthesized initially as an inactive proenzyme. Formation of the active enzyme involves a self-maturation process in which the active site pyruvoyl group is generated from an internal serine residue via an autocatalytic post-translational modification. Two non-identical subunits are generated from the proenzyme in this reaction, and the pyruvate is formed at the N-terminus of the alpha chain, which is derived from the carboxyl end of the proenzyme. The post-translation cleavage follows an unusual pathway, termed non-hydrolytic serinolysis, in which the side chain hydroxyl group of the serine supplies its oxygen atom to form the C-terminus of the beta chain, while the remainder of the serine residue undergoes an oxidative deamination to produce ammonia and the pyruvoyl group blocking the N-terminus of the alpha chain.

The enzyme catalyses S-adenosyl-L-methionine + H(+) = S-adenosyl 3-(methylsulfanyl)propylamine + CO2. Its pathway is amine and polyamine biosynthesis; S-adenosylmethioninamine biosynthesis; S-adenosylmethioninamine from S-adenosyl-L-methionine: step 1/1. In terms of biological role, catalyzes the decarboxylation of S-adenosylmethionine to S-adenosylmethioninamine (dcAdoMet), the propylamine donor required for the synthesis of the polyamines spermine and spermidine from the diamine putrescine. This is S-adenosylmethionine decarboxylase proenzyme from Thermococcus kodakarensis (strain ATCC BAA-918 / JCM 12380 / KOD1) (Pyrococcus kodakaraensis (strain KOD1)).